A 243-amino-acid polypeptide reads, in one-letter code: Hydroxyacylglutathione hydrolase (243 aa).

His52, His54, Asp56, His57, His108, Asp125, and His163 together coordinate Zn(2+).

It belongs to the metallo-beta-lactamase superfamily. Glyoxalase II family. In terms of assembly, monomer. Zn(2+) serves as cofactor.

The catalysed reaction is an S-(2-hydroxyacyl)glutathione + H2O = a 2-hydroxy carboxylate + glutathione + H(+). It participates in secondary metabolite metabolism; methylglyoxal degradation; (R)-lactate from methylglyoxal: step 2/2. Its function is as follows. Thiolesterase that catalyzes the hydrolysis of S-D-lactoyl-glutathione to form glutathione and D-lactic acid. The chain is Hydroxyacylglutathione hydrolase from Haemophilus influenzae (strain PittGG).